We begin with the raw amino-acid sequence, 291 residues long: 33 kDa chaperonin (291 aa).

2 cysteine pairs are disulfide-bonded: C229–C231 and C262–C265.

It belongs to the HSP33 family. In terms of processing, under oxidizing conditions two disulfide bonds are formed involving the reactive cysteines. Under reducing conditions zinc is bound to the reactive cysteines and the protein is inactive.

The protein localises to the cytoplasm. Its function is as follows. Redox regulated molecular chaperone. Protects both thermally unfolding and oxidatively damaged proteins from irreversible aggregation. Plays an important role in the bacterial defense system toward oxidative stress. The sequence is that of 33 kDa chaperonin from Vibrio parahaemolyticus serotype O3:K6 (strain RIMD 2210633).